A 219-amino-acid polypeptide reads, in one-letter code: Small ribosomal subunit protein eS1 (219 aa).

Belongs to the eukaryotic ribosomal protein eS1 family. As to quaternary structure, component of the small ribosomal subunit. Mature ribosomes consist of a small (40S) and a large (60S) subunit. The 40S subunit contains about 33 different proteins and 1 molecule of RNA (18S). The 60S subunit contains about 49 different proteins and 3 molecules of RNA (25S, 5.8S and 5S).

The protein resides in the cytoplasm. In Guillardia theta (Cryptophyte), this protein is Small ribosomal subunit protein eS1.